Consider the following 346-residue polypeptide: Methylthioribose-1-phosphate isomerase (346 aa).

Substrate is bound by residues 44–46, arginine 87, and glutamine 194; that span reads RGA. Aspartate 235 acts as the Proton donor in catalysis. Position 245 to 246 (245 to 246) interacts with substrate; it reads NK.

The protein belongs to the eIF-2B alpha/beta/delta subunits family. MtnA subfamily.

The enzyme catalyses 5-(methylsulfanyl)-alpha-D-ribose 1-phosphate = 5-(methylsulfanyl)-D-ribulose 1-phosphate. It functions in the pathway amino-acid biosynthesis; L-methionine biosynthesis via salvage pathway; L-methionine from S-methyl-5-thio-alpha-D-ribose 1-phosphate: step 1/6. In terms of biological role, catalyzes the interconversion of methylthioribose-1-phosphate (MTR-1-P) into methylthioribulose-1-phosphate (MTRu-1-P). This chain is Methylthioribose-1-phosphate isomerase, found in Desulforamulus reducens (strain ATCC BAA-1160 / DSM 100696 / MI-1) (Desulfotomaculum reducens).